Reading from the N-terminus, the 494-residue chain is Flagellin A (494 aa).

It belongs to the bacterial flagellin family. As to quaternary structure, heteromer of FlaA and FlaB. FlaB is located proximal to the hook while the remainder of the filament is composed of the predominant FlaA.

The protein resides in the secreted. It localises to the bacterial flagellum. Flagellin is the subunit protein which polymerizes to form the filaments of bacterial flagella. Important for motility and virulence. The chain is Flagellin A (flaA) from Helicobacter mustelae.